The sequence spans 249 residues: Ribonuclease 3 (249 aa).

The region spanning 20–149 is the RNase III domain; sequence FKEFQERISV…FIGALYLDQG (130 aa). Position 62 (Glu62) interacts with Mg(2+). Asp66 is a catalytic residue. 2 residues coordinate Mg(2+): Asp135 and Glu138. Glu138 is a catalytic residue. The DRBM domain maps to 175–244; it reads DFKSQLQEFV…AQEALAKMQK (70 aa). A disordered region spans residues 223 to 249; that stretch reads NGRSKKEAEQHAAQEALAKMQKHHTKQ.

Belongs to the ribonuclease III family. In terms of assembly, homodimer. Requires Mg(2+) as cofactor.

The protein resides in the cytoplasm. It catalyses the reaction Endonucleolytic cleavage to 5'-phosphomonoester.. Its function is as follows. Digests double-stranded RNA. Involved in the processing of primary rRNA transcript to yield the immediate precursors to the large and small rRNAs (23S and 16S). Processes some mRNAs, and tRNAs when they are encoded in the rRNA operon. Processes pre-crRNA and tracrRNA of type II CRISPR loci if present in the organism. The polypeptide is Ribonuclease 3 (Bacillus velezensis (strain DSM 23117 / BGSC 10A6 / LMG 26770 / FZB42) (Bacillus amyloliquefaciens subsp. plantarum)).